Consider the following 130-residue polypeptide: Small ribosomal subunit protein uS8 (130 aa).

Belongs to the universal ribosomal protein uS8 family. Part of the 30S ribosomal subunit. Contacts proteins S5 and S12.

In terms of biological role, one of the primary rRNA binding proteins, it binds directly to 16S rRNA central domain where it helps coordinate assembly of the platform of the 30S subunit. The sequence is that of Small ribosomal subunit protein uS8 from Vibrio cholerae serotype O1 (strain ATCC 39541 / Classical Ogawa 395 / O395).